Here is a 174-residue protein sequence, read N- to C-terminus: Crossover junction endodeoxyribonuclease RuvC (174 aa).

Residues Asp-8, Glu-67, and Asp-139 contribute to the active site. Residues Asp-8, Glu-67, and Asp-139 each coordinate Mg(2+).

Belongs to the RuvC family. As to quaternary structure, homodimer which binds Holliday junction (HJ) DNA. The HJ becomes 2-fold symmetrical on binding to RuvC with unstacked arms; it has a different conformation from HJ DNA in complex with RuvA. In the full resolvosome a probable DNA-RuvA(4)-RuvB(12)-RuvC(2) complex forms which resolves the HJ. Mg(2+) serves as cofactor.

Its subcellular location is the cytoplasm. The catalysed reaction is Endonucleolytic cleavage at a junction such as a reciprocal single-stranded crossover between two homologous DNA duplexes (Holliday junction).. Its function is as follows. The RuvA-RuvB-RuvC complex processes Holliday junction (HJ) DNA during genetic recombination and DNA repair. Endonuclease that resolves HJ intermediates. Cleaves cruciform DNA by making single-stranded nicks across the HJ at symmetrical positions within the homologous arms, yielding a 5'-phosphate and a 3'-hydroxyl group; requires a central core of homology in the junction. The consensus cleavage sequence is 5'-(A/T)TT(C/G)-3'. Cleavage occurs on the 3'-side of the TT dinucleotide at the point of strand exchange. HJ branch migration catalyzed by RuvA-RuvB allows RuvC to scan DNA until it finds its consensus sequence, where it cleaves and resolves the cruciform DNA. The polypeptide is Crossover junction endodeoxyribonuclease RuvC (Stutzerimonas stutzeri (strain A1501) (Pseudomonas stutzeri)).